The sequence spans 255 residues: NAD kinase (255 aa).

Residue aspartate 44 is the Proton acceptor of the active site. Residues 44-45 (DG), histidine 49, 114-115 (NE), aspartate 144, alanine 152, 155-160 (SAYNLS), and glutamine 216 each bind NAD(+).

This sequence belongs to the NAD kinase family. It depends on a divalent metal cation as a cofactor.

The protein resides in the cytoplasm. It catalyses the reaction NAD(+) + ATP = ADP + NADP(+) + H(+). Functionally, involved in the regulation of the intracellular balance of NAD and NADP, and is a key enzyme in the biosynthesis of NADP. Catalyzes specifically the phosphorylation on 2'-hydroxyl of the adenosine moiety of NAD to yield NADP. The sequence is that of NAD kinase from Rickettsia typhi (strain ATCC VR-144 / Wilmington).